The following is a 545-amino-acid chain: Chaperonin GroEL (545 aa).

Residues T29–P32, K50, D86–T90, G413, and D495 each bind ATP.

It belongs to the chaperonin (HSP60) family. Forms a cylinder of 14 subunits composed of two heptameric rings stacked back-to-back. Interacts with the co-chaperonin GroES.

It is found in the cytoplasm. It carries out the reaction ATP + H2O + a folded polypeptide = ADP + phosphate + an unfolded polypeptide.. Its function is as follows. Together with its co-chaperonin GroES, plays an essential role in assisting protein folding. The GroEL-GroES system forms a nano-cage that allows encapsulation of the non-native substrate proteins and provides a physical environment optimized to promote and accelerate protein folding. This is Chaperonin GroEL from Borreliella burgdorferi (strain ATCC 35210 / DSM 4680 / CIP 102532 / B31) (Borrelia burgdorferi).